Here is a 316-residue protein sequence, read N- to C-terminus: MIIGTRGSQLALAQAETVARLLKAKGVETSLKIIKTSGDRFTDRPLHAVSSGVGAFVRELDEVMLEGKIDIAVHSMKDMPTIRPPTLPTVAVLKRDTPFDLLLTYDGTPLDELSEQSIIGTSSLRRAAQIKRYRPDLVTQDLRGNIDTRLRKLKEGKYDGILLAKAGLERMGWELEGEILSPDFFCPSPNQGTIAVVTRAETEAEAAVSRLDHTDSRIATEIERILISELGGGCTTPIGSYAEIMPDRKKLHVRAEVLSLDGEETVGINEFIPMAGGIEKARELGSSLVHMGGKKLADEALMQLSRDSCDSNDLHE.

Cysteine 234 carries the S-(dipyrrolylmethanemethyl)cysteine modification.

It belongs to the HMBS family. Dipyrromethane is required as a cofactor.

It carries out the reaction 4 porphobilinogen + H2O = hydroxymethylbilane + 4 NH4(+). The protein operates within porphyrin-containing compound metabolism; protoporphyrin-IX biosynthesis; coproporphyrinogen-III from 5-aminolevulinate: step 2/4. In terms of biological role, tetrapolymerization of the monopyrrole PBG into the hydroxymethylbilane pre-uroporphyrinogen in several discrete steps. The sequence is that of Probable porphobilinogen deaminase from Methanosarcina barkeri (strain Fusaro / DSM 804).